The sequence spans 443 residues: UDP-glucuronic acid decarboxylase 4 (443 aa).

Ala2 is modified (N-acetylalanine). At 2–43 (ASELTNRRHEIEQPEAESYYPKPIKPWFVAIRPIRYMLREQR) the chain is on the cytoplasmic side. Residues 44–64 (LVFVLVGIAIATLGFTIFSKS) traverse the membrane as a helical; Signal-anchor for type II membrane protein segment. Residues 65–443 (SNHQPIPYDV…DSSTTSSSTE (379 aa)) lie on the Lumenal side of the membrane. Position 151-176 (151-176 (DNFFTGRKENVMHHFNNPNFEMIRHD)) interacts with NAD(+). Residue Arg260 participates in substrate binding. The active-site Proton acceptor is the Tyr263. NAD(+) is bound at residue 263–267 (YDEGK). Asn292 is a binding site for substrate. Arg304 serves as a coordination point for NAD(+). Substrate contacts are provided by residues 305–309 (VVSNF), 322–329 (YGDGKQTR), and 389–393 (DPHKR).

Belongs to the NAD(P)-dependent epimerase/dehydratase family. UDP-glucuronic acid decarboxylase subfamily. NAD(+) serves as cofactor.

The protein resides in the golgi apparatus. The protein localises to the golgi stack membrane. The catalysed reaction is UDP-alpha-D-glucuronate + H(+) = UDP-alpha-D-xylose + CO2. Its pathway is nucleotide-sugar biosynthesis; UDP-alpha-D-xylose biosynthesis; UDP-alpha-D-xylose from UDP-alpha-D-glucuronate: step 1/1. Catalyzes the NAD-dependent decarboxylation of UDP-glucuronic acid to UDP-xylose. Necessary for the biosynthesis of the core tetrasaccharide in glycosaminoglycan biosynthesis. The protein is UDP-glucuronic acid decarboxylase 4 (UXS4) of Arabidopsis thaliana (Mouse-ear cress).